A 773-amino-acid polypeptide reads, in one-letter code: DC-STAMP domain-containing protein 2 (773 aa).

Residues 1–26 (MPKVMKDVVHPLGGEEPSMARAVVRS) are Cytoplasmic-facing. Residues 27-47 (VGGFTLGLSLATAYGLLELLV) form a helical membrane-spanning segment. The Extracellular portion of the chain corresponds to 48 to 51 (EGHS). A helical transmembrane segment spans residues 52-72 (PWGCLVGTLTLAAFLSLGMGF). Over 73-233 (SRQVRATVLL…IPQAYHLCYV (161 aa)) the chain is Cytoplasmic. Residues 234-254 (LMPFKLALCGLASLVQVFCVI) traverse the membrane as a helical segment. Residues 255–322 (PKYIQPFLRQ…SMKLHRVREA (68 aa)) are Extracellular-facing. Residues N284 and N296 are each glycosylated (N-linked (GlcNAc...) asparagine). A helical membrane pass occupies residues 323–343 (LALMGFTTPLLLVLLYLQALF). At 344–415 (YRYCYLNWDH…ILETFNLIRH (72 aa)) the chain is on the cytoplasmic side. The helical transmembrane segment at 416–436 (LLLVLFLVFLDYAVFWVLDLA) threads the bilayer. Over 437 to 499 (RHQLQGEIVA…LRPSEPDSTG (63 aa)) the chain is Extracellular. N480 carries an N-linked (GlcNAc...) asparagine glycan. The chain crosses the membrane as a helical span at residues 500 to 520 (YIVIGVMYGLCFFITLFGSYV). Residues 521-773 (SRLRRVICAS…LPDPSHPPPK (253 aa)) lie on the Cytoplasmic side of the membrane. Low complexity predominate over residues 692 to 701 (SLSMESTSES). The disordered stretch occupies residues 692-773 (SLSMESTSES…LPDPSHPPPK (82 aa)). Residues 758–773 (PLSPPSLPDPSHPPPK) are compositionally biased toward pro residues.

As to quaternary structure, interacts with DCST1.

Its subcellular location is the cytoplasmic vesicle. It is found in the secretory vesicle. It localises to the acrosome membrane. Functionally, essential sperm cell-surface protein required for sperm-egg fusion and fertilization. This Homo sapiens (Human) protein is DC-STAMP domain-containing protein 2 (DCST2).